Consider the following 139-residue polypeptide: Translation initiation factor 2 subunit beta (139 aa).

It belongs to the eIF-2-beta/eIF-5 family. Heterotrimer composed of an alpha, a beta and a gamma chain.

Its function is as follows. eIF-2 functions in the early steps of protein synthesis by forming a ternary complex with GTP and initiator tRNA. This Sulfurisphaera tokodaii (strain DSM 16993 / JCM 10545 / NBRC 100140 / 7) (Sulfolobus tokodaii) protein is Translation initiation factor 2 subunit beta.